A 331-amino-acid polypeptide reads, in one-letter code: Protein RecA (331 aa).

Residue 67–74 coordinates ATP; the sequence is GPESSGKT.

This sequence belongs to the RecA family.

The protein resides in the cytoplasm. In terms of biological role, can catalyze the hydrolysis of ATP in the presence of single-stranded DNA, the ATP-dependent uptake of single-stranded DNA by duplex DNA, and the ATP-dependent hybridization of homologous single-stranded DNAs. It interacts with LexA causing its activation and leading to its autocatalytic cleavage. This is Protein RecA from Wigglesworthia glossinidia brevipalpis.